Reading from the N-terminus, the 286-residue chain is MAITTAASRLGTEPFSDAPKVELRPKASREEVESVIRAVYRHVLGNDYILASERLVSAESLLRDGNLTVREFVRSVAKSELYKKKFFYNSFQTRLIELNYKHLLGRAPYDESEVVYHLDLYQNKGYDAEIDSYIDSWEYQSNFGDNVVPYYRGFETQVGQKTAGFNRIFRLYRGYANSDRAQVEGTKSRLARELASNKASTIVGPSGTNDSWGFRASADVAPKKNLGNAVGEGDRVYRLEVTGIRSPGYPSVRRSSTVFIVPYERLSDKIQQVHKQGGKIVSVTSA.

The PBS-linker domain maps to 2–180 (AITTAASRLG…LYRGYANSDR (179 aa)). Residues 234-286 (DRVYRLEVTGIRSPGYPSVRRSSTVFIVPYERLSDKIQQVHKQGGKIVSVTSA) form the CpcD-like domain.

This sequence belongs to the phycobilisome linker protein family. Associated with the phycobilisome, a hemidiscoidal structure that is composed of two distinct substructures: a core complex and a number of rods radiating from the core.

It is found in the cellular thylakoid membrane. Rod linker protein, associated with phycocyanin. Linker polypeptides determine the state of aggregation and the location of the disk-shaped phycobiliprotein units within the phycobilisome and modulate their spectroscopic properties in order to mediate a directed and optimal energy transfer. This Nostoc sp. (strain PCC 7120 / SAG 25.82 / UTEX 2576) protein is Phycobilisome 32.1 kDa linker polypeptide, phycocyanin-associated, rod (cpcC).